The primary structure comprises 378 residues: Cytochrome b (378 aa).

4 helical membrane-spanning segments follow: residues 34–54 (FGSL…FLAM), 78–99 (WLLR…YLHV), 114–134 (WLIG…GYVL), and 179–199 (FFTF…IHLL). Residues H84 and H98 each contribute to the heme b site. 2 residues coordinate heme b: H183 and H197. H202 contributes to the a ubiquinone binding site. Transmembrane regions (helical) follow at residues 227–247 (FKDI…VLIS), 289–309 (LGGV…PFYN), 321–341 (INQV…WIGA), and 348–368 (YVLI…VNPL).

This sequence belongs to the cytochrome b family. The main subunits of complex b-c1 are: cytochrome b, cytochrome c1 and the Rieske protein. Requires heme b as cofactor.

It is found in the mitochondrion inner membrane. Its function is as follows. Component of the ubiquinol-cytochrome c reductase complex (complex III or cytochrome b-c1 complex) that is part of the mitochondrial respiratory chain. The b-c1 complex mediates electron transfer from ubiquinol to cytochrome c. Contributes to the generation of a proton gradient across the mitochondrial membrane that is then used for ATP synthesis. The polypeptide is Cytochrome b (mt:Cyt-b) (Drosophila sechellia (Fruit fly)).